The primary structure comprises 421 residues: Enolase (421 aa).

Residue Gln162 participates in (2R)-2-phosphoglycerate binding. Glu204 serves as the catalytic Proton donor. Positions 241, 284, and 311 each coordinate Mg(2+). Positions 336, 365, 366, and 387 each coordinate (2R)-2-phosphoglycerate. The active-site Proton acceptor is the Lys336.

The protein belongs to the enolase family. Requires Mg(2+) as cofactor.

The protein resides in the cytoplasm. The protein localises to the secreted. It is found in the cell surface. It catalyses the reaction (2R)-2-phosphoglycerate = phosphoenolpyruvate + H2O. The protein operates within carbohydrate degradation; glycolysis; pyruvate from D-glyceraldehyde 3-phosphate: step 4/5. Functionally, catalyzes the reversible conversion of 2-phosphoglycerate (2-PG) into phosphoenolpyruvate (PEP). It is essential for the degradation of carbohydrates via glycolysis. The protein is Enolase of Nautilia profundicola (strain ATCC BAA-1463 / DSM 18972 / AmH).